A 145-amino-acid polypeptide reads, in one-letter code: Protein FimA (145 aa).

The protein belongs to the fimbrial protein family.

The protein resides in the fimbrium. The polypeptide is Protein FimA (fimA) (Bordetella pertussis).